Reading from the N-terminus, the 943-residue chain is Tyrosine-protein kinase transmembrane receptor ROR2 (943 aa).

The N-terminal stretch at 1–33 (MARGSALPRRPLLCIPAVWAAAALLLSVSRTSG) is a signal peptide. Topologically, residues 34 to 403 (EVEVLDPNDP…CSPRDSSKMG (370 aa)) are extracellular. Positions 55–145 (PTLKGYFLNF…VATNGMKTIT (91 aa)) constitute an Ig-like C2-type domain. Asparagine 70 carries an N-linked (GlcNAc...) asparagine glycan. Intrachain disulfides connect cysteine 83-cysteine 135, cysteine 174-cysteine 239, cysteine 182-cysteine 232, cysteine 223-cysteine 264, cysteine 252-cysteine 300, cysteine 256-cysteine 286, cysteine 316-cysteine 394, cysteine 337-cysteine 377, and cysteine 365-cysteine 389. The FZ domain occupies 169–303 (HEDGFCQPYR…SPDAANCMRI (135 aa)). The N-linked (GlcNAc...) asparagine glycan is linked to asparagine 188. The Kringle domain maps to 316–394 (CYNGSGMDYR…RMELCDVPSC (79 aa)). The N-linked (GlcNAc...) asparagine glycan is linked to asparagine 318. A helical transmembrane segment spans residues 404 to 424 (ILYILVPSIAIPLVIACLFFL). Residues 425–943 (VCMCRNKQKA…VDEAQVQLEA (519 aa)) lie on the Cytoplasmic side of the membrane. 2 positions are modified to sulfoserine; partial: serine 469 and serine 471. A Protein kinase domain is found at 473-746 (VRFMEELGED…PRFKDIHSRL (274 aa)). ATP is bound by residues 479–487 (LGEDRFGKV) and lysine 507. Residue aspartate 615 is the Proton acceptor of the active site. A Phosphotyrosine; by autocatalysis modification is found at tyrosine 646. 2 disordered regions span residues 757 to 796 (SSAQ…APPF) and 850 to 931 (QVPP…DCDT). 2 stretches are compositionally biased toward low complexity: residues 765–791 (SNTT…GPKQ) and 857–872 (PKPS…TSTG). Arginine 785 carries the post-translational modification Asymmetric dimethylarginine. Residues 873–883 (YVTTAPSNTSM) are compositionally biased toward polar residues.

Belongs to the protein kinase superfamily. Tyr protein kinase family. ROR subfamily. As to quaternary structure, homodimer; promotes osteogenesis. Binds YWHAB. Interacts with WTIP. Interacts with ROR2. It depends on Mg(2+) as a cofactor.

It localises to the cell membrane. The catalysed reaction is L-tyrosyl-[protein] + ATP = O-phospho-L-tyrosyl-[protein] + ADP + H(+). Functionally, tyrosine-protein kinase receptor which may be involved in the early formation of the chondrocytes. It seems to be required for cartilage and growth plate development. Phosphorylates YWHAB, leading to induction of osteogenesis and bone formation. In contrast, has also been shown to have very little tyrosine kinase activity in vitro. May act as a receptor for wnt ligand WNT5A which may result in the inhibition of WNT3A-mediated signaling. The polypeptide is Tyrosine-protein kinase transmembrane receptor ROR2 (ROR2) (Homo sapiens (Human)).